A 313-amino-acid polypeptide reads, in one-letter code: Ribosomal protein L11 methyltransferase (313 aa).

T161, G182, D204, and N247 together coordinate S-adenosyl-L-methionine.

It belongs to the methyltransferase superfamily. PrmA family.

It is found in the cytoplasm. It catalyses the reaction L-lysyl-[protein] + 3 S-adenosyl-L-methionine = N(6),N(6),N(6)-trimethyl-L-lysyl-[protein] + 3 S-adenosyl-L-homocysteine + 3 H(+). In terms of biological role, methylates ribosomal protein L11. This Halalkalibacterium halodurans (strain ATCC BAA-125 / DSM 18197 / FERM 7344 / JCM 9153 / C-125) (Bacillus halodurans) protein is Ribosomal protein L11 methyltransferase.